The following is a 153-amino-acid chain: Ribosome maturation factor RimP (153 aa).

Belongs to the RimP family.

Its subcellular location is the cytoplasm. Required for maturation of 30S ribosomal subunits. The sequence is that of Ribosome maturation factor RimP from Pelotomaculum thermopropionicum (strain DSM 13744 / JCM 10971 / SI).